The sequence spans 316 residues: IDS-like terpene synthase 2 (316 aa).

Positions 69 and 73 each coordinate Mg(2+).

It belongs to the FPP/GGPP synthase family. Mg(2+) serves as cofactor.

The catalysed reaction is (2E)-geranyl diphosphate + H2O = linalool + diphosphate. The enzyme catalyses (2E,6E)-farnesyl diphosphate + H2O = (6E)-nerolidol + diphosphate. Terpene synthase that shows monoterpene synthase activity and produces linalool, using geranyl diphosphate (GPP) as substrate. Also shows sesquiterpene synthase activity as it is able to convert farnesyl diphosphate (FPP) into (E)-nerolidol. This chain is IDS-like terpene synthase 2, found in Melampsora larici-populina (strain 98AG31 / pathotype 3-4-7) (Poplar leaf rust fungus).